We begin with the raw amino-acid sequence, 382 residues long: Type II secretion system protein L (382 aa).

Residues 1–233 (MSGVSALFLP…QQSSQWRRWR (233 aa)) are Cytoplasmic-facing. Residues 234-254 (PLLGLVGLWLVLQWGFTLVQA) form a helical membrane-spanning segment. The Periplasmic portion of the chain corresponds to 255–382 (WQLQREGDRY…TVSARLVIGG (128 aa)).

This sequence belongs to the GSP L family. In terms of assembly, type II secretion system is composed of four main components: the outer membrane complex, the inner membrane complex, the cytoplasmic secretion ATPase and the periplasm-spanning pseudopilus. Forms homodimers. Interacts with XcpZ/GspM. Interacts with XcpR/GspE and XcpS/GspF.

The protein resides in the cell inner membrane. In terms of biological role, inner membrane component of the type II secretion system required for the energy-dependent secretion of extracellular factors such as proteases and toxins from the periplasm. Plays a role in the complex assembly and recruits XcpZ resulting in a stable complex in the inner membrane. Provides thus a link between the energy-providing XcpR protein in the cytoplasm and the rest of the T2SS machinery. The sequence is that of Type II secretion system protein L (xcpY) from Pseudomonas aeruginosa (strain ATCC 15692 / DSM 22644 / CIP 104116 / JCM 14847 / LMG 12228 / 1C / PRS 101 / PAO1).